The following is a 402-amino-acid chain: DNA polymerase IV (402 aa).

The UmuC domain maps to 5–187 (ILLADMNSFY…LPVRELFGVG (183 aa)). Residues Asp9 and Asp105 each coordinate Mg(2+). Residue Glu106 is part of the active site.

The protein belongs to the DNA polymerase type-Y family. As to quaternary structure, monomer. It depends on Mg(2+) as a cofactor.

The protein resides in the cytoplasm. It catalyses the reaction DNA(n) + a 2'-deoxyribonucleoside 5'-triphosphate = DNA(n+1) + diphosphate. In terms of biological role, poorly processive, error-prone DNA polymerase involved in untargeted mutagenesis. Copies undamaged DNA at stalled replication forks, which arise in vivo from mismatched or misaligned primer ends. These misaligned primers can be extended by PolIV. Exhibits no 3'-5' exonuclease (proofreading) activity. May be involved in translesional synthesis, in conjunction with the beta clamp from PolIII. The protein is DNA polymerase IV of Pelotomaculum thermopropionicum (strain DSM 13744 / JCM 10971 / SI).